The primary structure comprises 1406 residues: DNA-directed RNA polymerase subunit beta' (1406 aa).

Zn(2+) is bound by residues C70, C72, C85, and C88. The Mg(2+) site is built by D460, D462, and D464. C814, C888, C895, and C898 together coordinate Zn(2+).

The protein belongs to the RNA polymerase beta' chain family. The RNAP catalytic core consists of 2 alpha, 1 beta, 1 beta' and 1 omega subunit. When a sigma factor is associated with the core the holoenzyme is formed, which can initiate transcription. It depends on Mg(2+) as a cofactor. Zn(2+) serves as cofactor.

The enzyme catalyses RNA(n) + a ribonucleoside 5'-triphosphate = RNA(n+1) + diphosphate. DNA-dependent RNA polymerase catalyzes the transcription of DNA into RNA using the four ribonucleoside triphosphates as substrates. This chain is DNA-directed RNA polymerase subunit beta', found in Colwellia psychrerythraea (strain 34H / ATCC BAA-681) (Vibrio psychroerythus).